Here is a 197-residue protein sequence, read N- to C-terminus: Negative modulator of initiation of replication (197 aa).

Belongs to the SeqA family. Homodimer. Polymerizes to form helical filaments.

It localises to the cytoplasm. In terms of biological role, negative regulator of replication initiation, which contributes to regulation of DNA replication and ensures that replication initiation occurs exactly once per chromosome per cell cycle. Binds to pairs of hemimethylated GATC sequences in the oriC region, thus preventing assembly of replication proteins and re-initiation at newly replicated origins. Repression is relieved when the region becomes fully methylated. The chain is Negative modulator of initiation of replication from Pseudoalteromonas translucida (strain TAC 125).